Reading from the N-terminus, the 467-residue chain is Sugar transporter ERD6-like 11 (467 aa).

Helical transmembrane passes span 26–46 (ITAC…SYGC), 75–95 (FLNV…VILG), 105–125 (FFCV…WLDL), 128–148 (ISLG…IAEI), 155–177 (GAFT…FFGT), 183–203 (VMAV…FFIP), 266–286 (LVVG…GITY), 301–321 (LGSM…LILV), 328–348 (PLLL…GVSF), 359–379 (LIPI…AFGI), 402–422 (IVAL…NFMF), and 428–448 (GTFY…WMLV).

This sequence belongs to the major facilitator superfamily. Sugar transporter (TC 2.A.1.1) family.

Its subcellular location is the membrane. Its function is as follows. Sugar transporter. The sequence is that of Sugar transporter ERD6-like 11 from Arabidopsis thaliana (Mouse-ear cress).